Here is a 555-residue protein sequence, read N- to C-terminus: Inositol 1,4,5-triphosphate receptor associated 2 (555 aa).

Residues 1-495 (MESTPFSGVA…LKSSIRKANK (495 aa)) lie on the Cytoplasmic side of the membrane. 2 disordered regions span residues 84-103 (SLPLPRHTSSTDGTITSSDP) and 128-147 (RSASPTIEAQGTSPAHDNIA). Phosphothreonine is present on T91. Low complexity predominate over residues 91 to 102 (TSSTDGTITSSD). A compositionally biased stretch (polar residues) spans 129–142 (SASPTIEAQGTSPA). Residues 227-341 (TLEKRVKLEE…LEELKQVLLQ (115 aa)) are a coiled coil. Phosphoserine occurs at positions 363, 370, and 424. Positions 437–469 (ELKTKDDSEPSGEETVERTRKPSLSEKKNNPSK) are disordered. A compositionally biased stretch (basic and acidic residues) spans 451–465 (TVERTRKPSLSEKKN). Residues 496–516 (ALWLSIAFIVLFAALMSFLTG) form a helical; Anchor for type IV membrane protein membrane-spanning segment. Residues 517–555 (QLFQKSVDAAPTQQEDSWTSLEHILWPFTRLRHNGPPPV) lie on the Lumenal side of the membrane.

It belongs to the IRAG2 family. Interacts (via coiled-coil domain) with ITPR3. Interacts with SUN1 and SUN2. Interacts with microtubules. Interacts with HCN4; regulates HCN4 channel activity. The removal of the C-terminal lumenal domain occurs by proteolytic processing. As to expression, expressed at high levels in pre B-cells, mature B-cells and pre T-cells. Expressed at low levels in mature T-cells and plasma B-cells. Expressed in germinal center B-cells, splenic marginal zone cells and B-cell lymphomas. Expressed in neuronal cells in the cerebral cortex, epithelial cells in tonsil, adrenal glands, zymogen-producing cells in the stomach and epithelial cells in seminal vesicles.

The protein localises to the cytoplasm. The protein resides in the endoplasmic reticulum membrane. It is found in the nucleus envelope. It localises to the cytoskeleton. Its subcellular location is the microtubule organizing center. The protein localises to the centrosome. The protein resides in the spindle pole. It is found in the chromosome. Its function is as follows. Plays a role in the delivery of peptides to major histocompatibility complex (MHC) class I molecules; this occurs in a transporter associated with antigen processing (TAP)-independent manner. May play a role in taste signal transduction via ITPR3. May play a role during fertilization in pronucleus congression and fusion. Plays a role in maintaining nuclear shape, maybe as a component of the LINC complex and through interaction with microtubules. Plays a role in the regulation of cellular excitability by regulating the hyperpolarization-activated cyclic nucleotide-gated HCN4 channel activity. This Homo sapiens (Human) protein is Inositol 1,4,5-triphosphate receptor associated 2.